A 110-amino-acid polypeptide reads, in one-letter code: Phosphoribosyl-ATP pyrophosphatase (110 aa).

Belongs to the PRA-PH family.

It localises to the cytoplasm. The catalysed reaction is 1-(5-phospho-beta-D-ribosyl)-ATP + H2O = 1-(5-phospho-beta-D-ribosyl)-5'-AMP + diphosphate + H(+). Its pathway is amino-acid biosynthesis; L-histidine biosynthesis; L-histidine from 5-phospho-alpha-D-ribose 1-diphosphate: step 2/9. The chain is Phosphoribosyl-ATP pyrophosphatase from Pseudomonas fluorescens (strain Pf0-1).